The primary structure comprises 215 residues: Cytochrome b6 (215 aa).

The helical transmembrane segment at 32-52 threads the bilayer; the sequence is IFYCLGGITLTCFLVQVATGF. Cys35 provides a ligand contact to heme c. His86 and His100 together coordinate heme b. The next 3 helical transmembrane spans lie at 90 to 110, 116 to 136, and 186 to 206; these read ASMM…TGGF, LTWV…VTGY, and LHTF…FPMI. Heme b-binding residues include His187 and His202.

Belongs to the cytochrome b family. PetB subfamily. The 4 large subunits of the cytochrome b6-f complex are cytochrome b6, subunit IV (17 kDa polypeptide, PetD), cytochrome f and the Rieske protein, while the 4 small subunits are PetG, PetL, PetM and PetN. The complex functions as a dimer. Heme b is required as a cofactor. It depends on heme c as a cofactor.

Its subcellular location is the plastid. The protein resides in the chloroplast thylakoid membrane. Functionally, component of the cytochrome b6-f complex, which mediates electron transfer between photosystem II (PSII) and photosystem I (PSI), cyclic electron flow around PSI, and state transitions. The sequence is that of Cytochrome b6 from Jasminum nudiflorum (Winter jasmine).